The following is a 234-amino-acid chain: Phosphoribosylaminoimidazole-succinocarboxamide synthase (234 aa).

Belongs to the SAICAR synthetase family.

The enzyme catalyses 5-amino-1-(5-phospho-D-ribosyl)imidazole-4-carboxylate + L-aspartate + ATP = (2S)-2-[5-amino-1-(5-phospho-beta-D-ribosyl)imidazole-4-carboxamido]succinate + ADP + phosphate + 2 H(+). It participates in purine metabolism; IMP biosynthesis via de novo pathway; 5-amino-1-(5-phospho-D-ribosyl)imidazole-4-carboxamide from 5-amino-1-(5-phospho-D-ribosyl)imidazole-4-carboxylate: step 1/2. The protein is Phosphoribosylaminoimidazole-succinocarboxamide synthase of Streptococcus pyogenes serotype M18 (strain MGAS8232).